We begin with the raw amino-acid sequence, 264 residues long: MHNNGRMLGVIGGSGFYTFFGSDTRTVNSDTPYGQPSAPITIGTIGVHDVAFLPRHGAHHQYSAHAVPYRANMWALRALGVRRVFGPCAVGSLDPELEPGAVVVPDQLVDRTSGRADTYFDFGGVHAAFADPYCPTLRAAVTGLPGVVDGGTMVVIQGPRFSTRAESQWFAAAGCNLVNMTGYPEAVLARELELCYAAIALVTDVDAGVAAGDGVKAADVFAAFGENIELLKRLVRAAIDRVADERTCTHCQHHAGVPLPFELP.

Residues serine 14 and arginine 55–histidine 56 contribute to the phosphate site. Methionine 180 contacts substrate. Threonine 181 serves as a coordination point for phosphate. Substrate is bound at residue aspartate 204–aspartate 206.

It belongs to the PNP/MTAP phosphorylase family. MTAP subfamily. Homodimer.

The catalysed reaction is S-methyl-5'-thioadenosine + phosphate = 5-(methylsulfanyl)-alpha-D-ribose 1-phosphate + adenine. It functions in the pathway amino-acid biosynthesis; L-methionine biosynthesis via salvage pathway; S-methyl-5-thio-alpha-D-ribose 1-phosphate from S-methyl-5'-thioadenosine (phosphorylase route): step 1/1. Not inhibited by adenosine, potently inhibited by MT-DADMe-immucillin A. Catalyzes the reversible phosphorylation of S-methyl-5'-thioadenosine (MTA) to adenine and 5-methylthioribose-1-phosphate. Involved in the breakdown of MTA, a major by-product of polyamine biosynthesis. Responsible for the first step in the methionine salvage pathway after MTA has been generated from S-adenosylmethionine. Prefers MTA, with 2% activity on adenosine, 0.8% activity on S-adenosyl-L-homocysteine and no activity on other tested nucleosides. The chain is S-methyl-5'-thioadenosine phosphorylase from Mycobacterium tuberculosis (strain ATCC 25618 / H37Rv).